The primary structure comprises 261 residues: Thiazole synthase (261 aa).

Lys-102 acts as the Schiff-base intermediate with DXP in catalysis. Residues Gly-163, 189–190 (AG), and 211–212 (NT) contribute to the 1-deoxy-D-xylulose 5-phosphate site.

It belongs to the ThiG family. In terms of assembly, homotetramer. Forms heterodimers with either ThiH or ThiS.

It localises to the cytoplasm. It carries out the reaction [ThiS sulfur-carrier protein]-C-terminal-Gly-aminoethanethioate + 2-iminoacetate + 1-deoxy-D-xylulose 5-phosphate = [ThiS sulfur-carrier protein]-C-terminal Gly-Gly + 2-[(2R,5Z)-2-carboxy-4-methylthiazol-5(2H)-ylidene]ethyl phosphate + 2 H2O + H(+). It participates in cofactor biosynthesis; thiamine diphosphate biosynthesis. Catalyzes the rearrangement of 1-deoxy-D-xylulose 5-phosphate (DXP) to produce the thiazole phosphate moiety of thiamine. Sulfur is provided by the thiocarboxylate moiety of the carrier protein ThiS. In vitro, sulfur can be provided by H(2)S. The polypeptide is Thiazole synthase (Acinetobacter baumannii (strain SDF)).